Reading from the N-terminus, the 222-residue chain is Ribosomal RNA small subunit methyltransferase G (222 aa).

S-adenosyl-L-methionine is bound by residues G80, L85, and R149.

Belongs to the methyltransferase superfamily. RNA methyltransferase RsmG family.

The protein resides in the cytoplasm. Its function is as follows. Specifically methylates the N7 position of a guanine in 16S rRNA. The polypeptide is Ribosomal RNA small subunit methyltransferase G (Treponema pallidum (strain Nichols)).